Here is a 408-residue protein sequence, read N- to C-terminus: UPF0761 membrane protein NMC0462 (408 aa).

Transmembrane regions (helical) follow at residues 43 to 63 (LLAL…FPVF), 100 to 120 (LTAI…RTID), 139 to 159 (FLVY…GISF), 176 to 196 (WSGA…LWGL), 210 to 230 (AFVG…LFTW), and 248 to 268 (VPFF…GAVL).

It belongs to the UPF0761 family.

The protein localises to the cell inner membrane. The polypeptide is UPF0761 membrane protein NMC0462 (Neisseria meningitidis serogroup C / serotype 2a (strain ATCC 700532 / DSM 15464 / FAM18)).